Reading from the N-terminus, the 419-residue chain is Transcription termination factor Rho (419 aa).

A Rho RNA-BD domain is found at 48 to 123 (DIFGDGVLEI…LKVNEVNYDK (76 aa)). RNA-binding stretches follow at residues 61 to 66 (GFGFLR), 78 to 80 (DIY), and 108 to 110 (ERY). Residues 169–174 (GRGQRG), 181–186 (KAGKTI), and R212 each bind ATP. The RNA-binding 2 stretch occupies residues 284–288 (VLTGG).

It belongs to the Rho family. As to quaternary structure, homohexamer. The homohexamer assembles into an open ring structure.

In terms of biological role, facilitates transcription termination by a mechanism that involves Rho binding to the nascent RNA, activation of Rho's RNA-dependent ATPase activity, and release of the mRNA from the DNA template. The sequence is that of Transcription termination factor Rho from Buchnera aphidicola subsp. Acyrthosiphon pisum (strain APS) (Acyrthosiphon pisum symbiotic bacterium).